Reading from the N-terminus, the 356-residue chain is Nuclear hormone receptor family member nhr-42 (356 aa).

Positions 7–82 (SQTCLICGDS…VGMRESAVLS (76 aa)) form a DNA-binding region, nuclear receptor. The NR C4-type zinc-finger motif lies at 10-30 (CLICGDSADSLHFGALSCRAC). Residues 48 to 70 (CDRQCKVDTGMRKLCASCRYDKC) form an NR C4-type; atypical zinc finger. The NR LBD domain occupies 108–356 (TSDSVLENLQ…HSSIFGNMAE (249 aa)).

The protein belongs to the nuclear hormone receptor family.

The protein resides in the nucleus. Orphan nuclear receptor. In Caenorhabditis elegans, this protein is Nuclear hormone receptor family member nhr-42 (nhr-42).